The chain runs to 556 residues: Single-strand DNA-binding protein (556 aa).

2 disordered regions span residues 1–95 (MDPK…SEVE) and 527–556 (FVRP…VNSL). Composition is skewed to polar residues over residues 10–25 (ENIT…TSDF) and 36–51 (VNST…GSQE). Composition is skewed to basic and acidic residues over residues 52–73 (TPEH…RLDA) and 539–548 (DSRRTYESRP).

As to quaternary structure, interacts with host VIP2 that promotes T-DNA integration into the host genome. Forms a complex made of virE2 and host proteins VIP1 and VBF. Forms heterodimers with the chaperone protein virE1 that prevent virE2 anarchic homopolymerization. Interacts with A.thaliana VIP1 that mediates its translocation to the host nucleus. Forms a complex made of VirE2, host VIP1 and VIP2 and single-stranded DNA (ssDNA).

The protein localises to the secreted. It is found in the host nucleus. In terms of biological role, involved in DNA transformation; mediates the nuclear uptake of single-stranded DNA copies of the transferred DNA (T-DNA) element. Binds single-stranded but not double-stranded DNA regardless of nucleotide sequence composition. In Agrobacterium fabrum (strain C58 / ATCC 33970) (Agrobacterium tumefaciens (strain C58)), this protein is Single-strand DNA-binding protein (virE2).